The chain runs to 459 residues: Peptidyl-prolyl cis-trans isomerase FKBP4 (459 aa).

M1 bears the N-acetylmethionine; in peptidyl-prolyl cis-trans isomerase FKBP4; alternate mark. The interval 1 to 22 (MTAEETKAAESGAQSAPLRLEG) is disordered. An N-acetylthreonine; in peptidyl-prolyl cis-trans isomerase FKBP4, N-terminally processed; partial modification is found at T2. Positions 50-138 (GDRVFVHYTG…VFEVELFEFK (89 aa)) constitute a PPIase FKBP-type 1 domain. T143 bears the Phosphothreonine mark. Residues 167–253 (GALVEVALEG…KYEIHLKSFE (87 aa)) form the PPIase FKBP-type 2 domain. Position 220 is a phosphotyrosine (Y220). Residues 267–400 (LEQSTIVKER…AQLVVCQQRI (134 aa)) form an interaction with tubulin region. 3 TPR repeats span residues 270 to 303 (STIV…LEYE), 319 to 352 (LASH…DSNN), and 354 to 386 (KGLF…YPSN). N6-acetyllysine is present on K282. R373 carries the omega-N-methylarginine modification. Positions 423–459 (TKAKATVAAGDQPADAEMRDEPKNDVAGGQPQVEAEA) are disordered.

In terms of assembly, homodimer. Interacts with GLMN. Associates with HSP90AA1 and HSP70 in steroid hormone receptor complexes. Also interacts with peroxisomal phytanoyl-CoA alpha-hydroxylase (PHYH). Interacts with NR3C1 and dynein. Interacts with HSF1 in the HSP90 complex. Associates with tubulin. Interacts with MAPT/TAU. Interacts (via TPR domain) with S100A1, S100A2 and S100A6; the interaction is Ca(2+) dependent. Interaction with S100A1 and S100A2 (but not with S100A6) leads to inhibition of FKBP4-HSP90 interaction. Interacts with dynein; causes partially NR3C1 transport to the nucleus.

The protein resides in the cytoplasm. It is found in the cytosol. It localises to the mitochondrion. Its subcellular location is the nucleus. The protein localises to the cytoskeleton. It catalyses the reaction [protein]-peptidylproline (omega=180) = [protein]-peptidylproline (omega=0). Inhibited by FK506. Its function is as follows. Immunophilin protein with PPIase and co-chaperone activities. Component of unligated steroid receptors heterocomplexes through interaction with heat-shock protein 90 (HSP90). May play a role in the intracellular trafficking of heterooligomeric forms of steroid hormone receptors between cytoplasm and nuclear compartments. The isomerase activity controls neuronal growth cones via regulation of TRPC1 channel opening. Also acts as a regulator of microtubule dynamics by inhibiting MAPT/TAU ability to promote microtubule assembly. May have a protective role against oxidative stress in mitochondria. This Bos taurus (Bovine) protein is Peptidyl-prolyl cis-trans isomerase FKBP4 (FKBP4).